Consider the following 417-residue polypeptide: Gamma-glutamyl phosphate reductase (417 aa).

This sequence belongs to the gamma-glutamyl phosphate reductase family.

It is found in the cytoplasm. The enzyme catalyses L-glutamate 5-semialdehyde + phosphate + NADP(+) = L-glutamyl 5-phosphate + NADPH + H(+). The protein operates within amino-acid biosynthesis; L-proline biosynthesis; L-glutamate 5-semialdehyde from L-glutamate: step 2/2. Functionally, catalyzes the NADPH-dependent reduction of L-glutamate 5-phosphate into L-glutamate 5-semialdehyde and phosphate. The product spontaneously undergoes cyclization to form 1-pyrroline-5-carboxylate. This chain is Gamma-glutamyl phosphate reductase, found in Escherichia coli O157:H7.